A 410-amino-acid polypeptide reads, in one-letter code: Mating-type locus allele B5 protein (410 aa).

Positions 1–110 (MSSDPNFSLT…FNVVSPAVVC (110 aa)) are variable domain between B alleles. The segment at residues 107-184 (AVVCRNLSED…NARRRSGWSH (78 aa)) is a DNA-binding region (homeobox; TALE-type). The segment at 111–410 (RNLSEDLPAY…PFLCLSVAFV (300 aa)) is highly conserved between B alleles. Disordered stretches follow at residues 201–241 (VRAK…TPAD), 275–336 (NKKT…PELS), and 366–395 (ILQS…PDEV). Low complexity predominate over residues 206–222 (SSSNQSTPPSPTSEYPS). The Nuclear localization signal signature appears at 276 to 308 (KKTPKPGMPRPVTTVTKRQPARKTKPAAKPKSR). The span at 294 to 307 (QPARKTKPAAKPKS) shows a compositional bias: basic residues. The span at 312–336 (PRASTTPSIDSTLDSSKLESTPELS) shows a compositional bias: polar residues. The segment at 333 to 410 (PELSMCSTAD…PFLCLSVAFV (78 aa)) is not essential for B5 function. Basic residues predominate over residues 375–388 (RGNRKVKALPKRAG).

It belongs to the TALE/M-ATYP homeobox family.

The protein resides in the nucleus. In terms of biological role, the B locus has at least 25 alleles, and any combination of two different B alleles yields a multimeric regulatory protein, that activates genes responsible for the pathogenicity and for the sexual development of the fungus within the corn plant. The chain is Mating-type locus allele B5 protein from Mycosarcoma maydis (Corn smut fungus).